Reading from the N-terminus, the 304-residue chain is Ribonuclease BN (304 aa).

Zn(2+) is bound by residues His-63, His-65, Asp-67, His-68, His-140, Asp-211, and His-269. The Proton acceptor role is filled by Asp-67.

The protein belongs to the RNase Z family. RNase BN subfamily. In terms of assembly, homodimer. It depends on Zn(2+) as a cofactor.

Zinc phosphodiesterase, which has both exoribonuclease and endoribonuclease activities. This chain is Ribonuclease BN, found in Erwinia tasmaniensis (strain DSM 17950 / CFBP 7177 / CIP 109463 / NCPPB 4357 / Et1/99).